A 304-amino-acid chain; its full sequence is Aspartate carbamoyltransferase catalytic subunit (304 aa).

Carbamoyl phosphate-binding residues include R49 and T50. K77 is a binding site for L-aspartate. Carbamoyl phosphate-binding residues include R99, H127, and Q130. Residues R160 and R211 each coordinate L-aspartate. 2 residues coordinate carbamoyl phosphate: A252 and P253.

It belongs to the aspartate/ornithine carbamoyltransferase superfamily. ATCase family. Heterododecamer (2C3:3R2) of six catalytic PyrB chains organized as two trimers (C3), and six regulatory PyrI chains organized as three dimers (R2).

The catalysed reaction is carbamoyl phosphate + L-aspartate = N-carbamoyl-L-aspartate + phosphate + H(+). It participates in pyrimidine metabolism; UMP biosynthesis via de novo pathway; (S)-dihydroorotate from bicarbonate: step 2/3. In terms of biological role, catalyzes the condensation of carbamoyl phosphate and aspartate to form carbamoyl aspartate and inorganic phosphate, the committed step in the de novo pyrimidine nucleotide biosynthesis pathway. The protein is Aspartate carbamoyltransferase catalytic subunit of Bacillus mycoides (strain KBAB4) (Bacillus weihenstephanensis).